The chain runs to 251 residues: Lactose phosphotransferase system repressor (251 aa).

Positions 3 to 58 (KYDRLDEITKLVNKRGSVRTNEIVEDLNVSDMTVRRDLAELEEKGVLTKIHGGARS) constitute an HTH deoR-type domain. A DNA-binding region (H-T-H motif) is located at residues 20-39 (VRTNEIVEDLNVSDMTVRRD).

Functionally, repressor of the lactose catabolism operon. Galactose-6-phosphate is the inducer. In Staphylococcus epidermidis (strain ATCC 35984 / DSM 28319 / BCRC 17069 / CCUG 31568 / BM 3577 / RP62A), this protein is Lactose phosphotransferase system repressor (lacR).